The chain runs to 162 residues: NADH-quinone oxidoreductase subunit I (162 aa).

2 4Fe-4S ferredoxin-type domains span residues 52–82 (LRRYPNGEERCIACKLCEAICPAQAITIEAG) and 93–122 (TRYDIDMVKCIYCGMCQEACPVDAIVEGPN). The [4Fe-4S] cluster site is built by Cys62, Cys65, Cys68, Cys72, Cys102, Cys105, Cys108, and Cys112.

It belongs to the complex I 23 kDa subunit family. NDH-1 is composed of 14 different subunits. Subunits NuoA, H, J, K, L, M, N constitute the membrane sector of the complex. It depends on [4Fe-4S] cluster as a cofactor.

It localises to the cell inner membrane. It carries out the reaction a quinone + NADH + 5 H(+)(in) = a quinol + NAD(+) + 4 H(+)(out). NDH-1 shuttles electrons from NADH, via FMN and iron-sulfur (Fe-S) centers, to quinones in the respiratory chain. The immediate electron acceptor for the enzyme in this species is believed to be ubiquinone. Couples the redox reaction to proton translocation (for every two electrons transferred, four hydrogen ions are translocated across the cytoplasmic membrane), and thus conserves the redox energy in a proton gradient. This is NADH-quinone oxidoreductase subunit I from Methylobacterium nodulans (strain LMG 21967 / CNCM I-2342 / ORS 2060).